Reading from the N-terminus, the 529-residue chain is L-ornithine N(5)-monooxygenase (529 aa).

Residues 100-108 (EKQPQFAWH) and glutamine 119 contribute to the FAD site. Residue lysine 124 coordinates substrate. FAD is bound at residue valine 185. 270 to 273 (NGQS) provides a ligand contact to NADP(+). Residues 309–312 (NEIF) and asparagine 339 each bind substrate. 339–341 (NYG) provides a ligand contact to NADP(+). Residue 493 to 495 (TLL) participates in FAD binding. Serine 496 is a substrate binding site.

Belongs to the lysine N(6)-hydroxylase/L-ornithine N(5)-oxygenase family. In terms of assembly, homotetramer. FAD serves as cofactor.

The enzyme catalyses L-ornithine + NADPH + O2 = N(5)-hydroxy-L-ornithine + NADP(+) + H2O. It carries out the reaction L-ornithine + NADH + O2 = N(5)-hydroxy-L-ornithine + NAD(+) + H2O. The protein operates within siderophore biosynthesis. In terms of biological role, L-ornithine N(5)-monooxygenase; part of the gene cluster that mediates the biosynthesis of hydroxamate-containing siderophores that play a critical role in virulence. Cochliobolus heterostrophus produces extracellular coprogen-type siderophores including coprogen, neocoprogen I and neocoprogen II, as well as the intracellular siderophore ferricrocin. The role of extracellular siderophores is to supply iron to their producers in planta and the intracellular ferricrocin is required for intracellular iron distribution and storage with a crucial role in ascus and ascospore development. SIDA2 catalyzes the conversion of L-ornithine to N(5)-hydroxyornithine, the first step in the biosynthesis of all hydroxamate-containing siderophores. The assembly of extracellular coprogen-type siderophores is then performed by the nonribosomal peptide synthetase (NRPS) NPS6 whereas the intracellular siderophore ferricrocin is assembled by NPS2. The sequence is that of L-ornithine N(5)-monooxygenase from Cochliobolus heterostrophus (strain C4 / ATCC 48331 / race T) (Southern corn leaf blight fungus).